Here is a 216-residue protein sequence, read N- to C-terminus: Nicotinamidase (216 aa).

Asp8 is a catalytic residue. The Zn(2+) site is built by Asp51, His53, and His94. The active site involves Lys122. Catalysis depends on Cys167, which acts as the Nucleophile.

It belongs to the isochorismatase family.

The protein resides in the cytoplasm. It localises to the nucleus. It is found in the peroxisome. The enzyme catalyses nicotinamide + H2O = nicotinate + NH4(+). Its pathway is cofactor biosynthesis; nicotinate biosynthesis; nicotinate from nicotinamide: step 1/1. With respect to regulation, inhibited by N-ethylmaleimide, HgCl(2) and PCMB. Competitively inhibited by NAD, NMN and 3-acetylpyridine. Catalyzes the deamidation of nicotinamide, an early step in the NAD(+) salvage pathway. Positively regulates SIR2-mediated silencing and longevity by preventing the accumulation of intracellular nicotinamide, an inhibitor of SIR2, during times of stress. Also acts on nicotinyl hydroxamate. The sequence is that of Nicotinamidase (PNC1) from Saccharomyces cerevisiae (strain ATCC 204508 / S288c) (Baker's yeast).